The primary structure comprises 477 residues: AAA-ATPase At3g28600 (477 aa).

Residues Met-1–Pro-26 form the signal peptide. Gly-245–Ser-252 provides a ligand contact to ATP.

This sequence belongs to the AAA ATPase family. BCS1 subfamily. The cofactor is Mg(2+).

The catalysed reaction is ATP + H2O = ADP + phosphate + H(+). In Arabidopsis thaliana (Mouse-ear cress), this protein is AAA-ATPase At3g28600.